A 192-amino-acid chain; its full sequence is Ion-translocating oxidoreductase complex subunit B (192 aa).

The interval 1–26 (MNTIWIAVGALTFLGLVFGAILGYAS) is hydrophobic. The region spanning 32–91 (EDDPVVEKIDAILPQSQCGQCGYPGCRPYAEAVGLQGEKINRCAPGGEAVMLKIADLLNV) is the 4Fe-4S domain. Positions 49, 52, 57, 74, 117, 120, 123, 127, 147, 150, 153, and 157 each coordinate [4Fe-4S] cluster. 4Fe-4S ferredoxin-type domains are found at residues 108-137 (MLAV…GATR) and 138-167 (AMHT…LRPV).

The protein belongs to the 4Fe4S bacterial-type ferredoxin family. RnfB subfamily. As to quaternary structure, the complex is composed of six subunits: RsxA, RsxB, RsxC, RsxD, RsxE and RsxG. Requires [4Fe-4S] cluster as cofactor.

It is found in the cell inner membrane. In terms of biological role, part of a membrane-bound complex that couples electron transfer with translocation of ions across the membrane. Required to maintain the reduced state of SoxR. This is Ion-translocating oxidoreductase complex subunit B from Salmonella arizonae (strain ATCC BAA-731 / CDC346-86 / RSK2980).